The chain runs to 263 residues: MTIYEQIKDALKNKINELVSPQEVKKTLQEKYGTNPDSIILSDYCYNRYNKGISFNKHLFEYMNRSSYKYLGENSLYTGLIFRKSKGEDKEVIVGEWVNGVKSLREASVTNNQINDQAEIISKEQLVNLYNEYNQILRYEMNVLNCKPTELRHLIGRIGEFICAIQTNGTLARQTNQHGFDVVSDGRRISVKTTAQSSGFISINKNTFYDFDDFFVVQYVNDDFKVIFFGSKEEVQKISRIYGSQYEVEISLLKKLNKEYQLN.

This is an uncharacterized protein from Bacillus subtilis (strain 168).